The chain runs to 210 residues: PEP-dependent dihydroxyacetone kinase, ADP-binding subunit DhaL (210 aa).

Residues 6–206 enclose the DhaL domain; that stretch reads TQIVNWLTRC…VMFMMQMLAL (201 aa). Asp-30, Asp-35, and Asp-37 together coordinate Mg(2+). Residues 38–41, 79–80, Gly-121, Met-130, Arg-178, and 191–193 each bind ADP; these read HGLN, AS, and DPG.

As to quaternary structure, homodimer. The dihydroxyacetone kinase complex is composed of a homodimer of DhaM, a homodimer of DhaK and the subunit DhaL. DhaL also forms a complex with DhaR. Mg(2+) is required as a cofactor.

The protein resides in the cytoplasm. The catalysed reaction is dihydroxyacetone + phosphoenolpyruvate = dihydroxyacetone phosphate + pyruvate. It participates in polyol metabolism; glycerol degradation. ADP-binding subunit of the dihydroxyacetone kinase, which is responsible for the phosphoenolpyruvate (PEP)-dependent phosphorylation of dihydroxyacetone. DhaL-ADP is converted to DhaL-ATP via a phosphoryl group transfer from DhaM and transmits it to dihydroxyacetone bound to DhaK. DhaL also acts as coactivator of the transcription activator DhaR by binding to the sensor domain of DhaR. In the presence of dihydroxyacetone, DhaL-ADP displaces DhaK and stimulates DhaR activity. In the absence of dihydroxyacetone, DhaL-ADP is converted by the PTS to DhaL-ATP, which does not bind to DhaR. The sequence is that of PEP-dependent dihydroxyacetone kinase, ADP-binding subunit DhaL from Escherichia coli (strain K12).